A 398-amino-acid polypeptide reads, in one-letter code: Phosphoglycerate kinase (398 aa).

Substrate is bound by residues 21-23 (DFN), Arg-36, 59-62 (HLGR), Arg-119, and Arg-157. Residues Lys-208, Gly-296, Glu-327, and 354–357 (GGDS) each bind ATP.

It belongs to the phosphoglycerate kinase family. As to quaternary structure, monomer.

The protein resides in the cytoplasm. The catalysed reaction is (2R)-3-phosphoglycerate + ATP = (2R)-3-phospho-glyceroyl phosphate + ADP. The protein operates within carbohydrate degradation; glycolysis; pyruvate from D-glyceraldehyde 3-phosphate: step 2/5. In Streptococcus agalactiae serotype III (strain NEM316), this protein is Phosphoglycerate kinase.